A 596-amino-acid polypeptide reads, in one-letter code: MKHIRNFSIIAHIDHGKSTLSDRLIQVCGGLTDREMAAQVLDSMDLERERGITIKAQSVTLDYHAKDGNTYLLNFIDTPGHVDFSYEVSRSLAACEGALLVVDAGQGVEAQTLANCYTALEMNLDVVPVLNKIDLPQAEPDRVAAEIEDIVGIDAMDAVRCSAKTGVGVDLVLEEIIAKIPPPVGDESAPLQALIIDSWFDAYLGVVSLVRIKNGILKKGEKFKVMSTGQNYNADRVGIFTPKEKDKTELRAGEVGYVISGIKEIHGAPVGDTLTHAKHGADKPLPGFKRVKPQVYAGVFPISTDEYESFRDALNKLSLNDASLFFEPETSSALGFGFRIGYLGLLHMEIVQERLEREYNLDLITTAPTVVYEVIMNNGETIYVDNPSGLPALNNIEEIREPIVEANILVPKEYLGNVITLCIEKRGSQTNMVYHGNQVAVTYHLPMAEVVMDFFDRLKSTSRGYASLEYNFIRFDPADMVRLDILINGDRVDALAMIIHRSNIRHRGLALVEKMKELIPRQMFDIAIQAAVGSQIIARSSIKALRKDVTAKCYGGDVSRKKKLLNKQKEGKKRMKQVGNVEVPQEAFLAVLKLND.

The tr-type G domain maps to 2–184 (KHIRNFSIIA…EIIAKIPPPV (183 aa)). GTP-binding positions include 14–19 (DHGKST) and 131–134 (NKID).

Belongs to the TRAFAC class translation factor GTPase superfamily. Classic translation factor GTPase family. LepA subfamily.

It is found in the cell inner membrane. It catalyses the reaction GTP + H2O = GDP + phosphate + H(+). Functionally, required for accurate and efficient protein synthesis under certain stress conditions. May act as a fidelity factor of the translation reaction, by catalyzing a one-codon backward translocation of tRNAs on improperly translocated ribosomes. Back-translocation proceeds from a post-translocation (POST) complex to a pre-translocation (PRE) complex, thus giving elongation factor G a second chance to translocate the tRNAs correctly. Binds to ribosomes in a GTP-dependent manner. The polypeptide is Elongation factor 4 (Shewanella frigidimarina (strain NCIMB 400)).